Here is a 704-residue protein sequence, read N- to C-terminus: SH3KBP1-binding protein 1 (704 aa).

At A2 the chain carries N-acetylalanine. The region spanning 19-88 (EVIHLNVGGK…LRTKELDPRG (70 aa)) is the BTB domain. Residues 145 to 165 (LVGPQQAGGRPAPVRRSNTMP) form a disordered region. The residue at position 163 (T163) is a Phosphothreonine. 5 WD repeats span residues 233-280 (RLDW…GGSE), 283-322 (VFHL…WQVQ), 324-359 (VQPI…LRMK), 428-466 (VHRS…GMIS), and 548-586 (LECE…DGLG). Over residues 611–644 (ASSRGSLPSPSPRTSLTSLHSAFSNTSLSSRRGS) the composition is skewed to low complexity. Residues 611–704 (ASSRGSLPSP…PKTKLNETSF (94 aa)) form a disordered region. Residues 618-623 (PSPSPR) carry the PXXXPR motif. A phosphoserine mark is found at S644 and S646. Residues 678 to 683 (PTPAPR) carry the PXXXPR motif.

This sequence belongs to the KCTD3 family. Monomer. Interacts with CUL3; interaction is direct and forms a 5:5 heterodecamer. Interacts (via PXXXPR motifs) with SH3KBP1 (via SH3 domains). Directly interacts with cathepsin B/CTSB.

The protein localises to the lysosome. Functionally, inhibits CBL-SH3KBP1 complex mediated down-regulation of EGFR signaling by sequestration of SH3KBP1. Binds to SH3KBP1 and prevents its interaction with CBL and inhibits translocation of SH3KBP1 to EGFR containing vesicles upon EGF stimulation. The polypeptide is SH3KBP1-binding protein 1 (SHKBP1) (Bos taurus (Bovine)).